A 383-amino-acid chain; its full sequence is tRNA-specific 2-thiouridylase MnmA (383 aa).

ATP-binding positions include 29 to 36 (GMSGGVDS) and methionine 55. Residues 115 to 117 (NPD) are interaction with target base in tRNA. Catalysis depends on cysteine 120, which acts as the Nucleophile. A disulfide bridge connects residues cysteine 120 and cysteine 217. Glycine 145 contacts ATP. An interaction with tRNA region spans residues 167–169 (KDQ). The active-site Cysteine persulfide intermediate is cysteine 217. An interaction with tRNA region spans residues 329–330 (RY).

The protein belongs to the MnmA/TRMU family.

It localises to the cytoplasm. The catalysed reaction is S-sulfanyl-L-cysteinyl-[protein] + uridine(34) in tRNA + AH2 + ATP = 2-thiouridine(34) in tRNA + L-cysteinyl-[protein] + A + AMP + diphosphate + H(+). In terms of biological role, catalyzes the 2-thiolation of uridine at the wobble position (U34) of tRNA, leading to the formation of s(2)U34. In Pasteurella multocida (strain Pm70), this protein is tRNA-specific 2-thiouridylase MnmA.